Consider the following 474-residue polypeptide: 3-isopropylmalate dehydratase large subunit (474 aa).

3 residues coordinate [4Fe-4S] cluster: cysteine 350, cysteine 411, and cysteine 414.

This sequence belongs to the aconitase/IPM isomerase family. LeuC type 1 subfamily. In terms of assembly, heterodimer of LeuC and LeuD. [4Fe-4S] cluster serves as cofactor.

It carries out the reaction (2R,3S)-3-isopropylmalate = (2S)-2-isopropylmalate. Its pathway is amino-acid biosynthesis; L-leucine biosynthesis; L-leucine from 3-methyl-2-oxobutanoate: step 2/4. Its function is as follows. Catalyzes the isomerization between 2-isopropylmalate and 3-isopropylmalate, via the formation of 2-isopropylmaleate. This is 3-isopropylmalate dehydratase large subunit from Hydrogenovibrio crunogenus (strain DSM 25203 / XCL-2) (Thiomicrospira crunogena).